We begin with the raw amino-acid sequence, 320 residues long: Probable trehalose-phosphate phosphatase C (320 aa).

Belongs to the trehalose phosphatase family. It depends on a divalent metal cation as a cofactor.

It catalyses the reaction alpha,alpha-trehalose 6-phosphate + H2O = alpha,alpha-trehalose + phosphate. It participates in glycan biosynthesis; trehalose biosynthesis. Its function is as follows. Removes the phosphate from trehalose 6-phosphate to produce free trehalose. Trehalose accumulation in plant may improve abiotic stress tolerance. This is Probable trehalose-phosphate phosphatase C (TPPC) from Arabidopsis thaliana (Mouse-ear cress).